The primary structure comprises 373 residues: Spermidine/putrescine import ATP-binding protein PotA (373 aa).

The region spanning 8 to 238 (FELRGVSKYF…PANLYVARFV (231 aa)) is the ABC transporter domain. ATP is bound at residue 40-47 (GPSGCGKT).

Belongs to the ABC transporter superfamily. Spermidine/putrescine importer (TC 3.A.1.11.1) family. In terms of assembly, the complex is composed of two ATP-binding proteins (PotA), two transmembrane proteins (PotB and PotC) and a solute-binding protein (PotD).

It is found in the cell inner membrane. It carries out the reaction ATP + H2O + polyamine-[polyamine-binding protein]Side 1 = ADP + phosphate + polyamineSide 2 + [polyamine-binding protein]Side 1.. In terms of biological role, part of the ABC transporter complex PotABCD involved in spermidine/putrescine import. Responsible for energy coupling to the transport system. The chain is Spermidine/putrescine import ATP-binding protein PotA from Oleidesulfovibrio alaskensis (strain ATCC BAA-1058 / DSM 17464 / G20) (Desulfovibrio alaskensis).